An 842-amino-acid chain; its full sequence is Protein translocase subunit SecA (842 aa).

ATP-binding positions include Q91, 109–113 (GEGKT), and D498. The segment covering 798-824 (QGQHVSAEDGKEKVKPQPVVKDNHIGR) has biased composition (basic and acidic residues). The interval 798–827 (QGQHVSAEDGKEKVKPQPVVKDNHIGRNDP) is disordered. Zn(2+)-binding residues include C828, C830, C839, and C840.

The protein belongs to the SecA family. Monomer and homodimer. Part of the essential Sec protein translocation apparatus which comprises SecA, SecYEG and auxiliary proteins SecDF. Other proteins may also be involved. It depends on Zn(2+) as a cofactor.

The protein localises to the cell membrane. It is found in the cytoplasm. The catalysed reaction is ATP + H2O + cellular proteinSide 1 = ADP + phosphate + cellular proteinSide 2.. Part of the Sec protein translocase complex. Interacts with the SecYEG preprotein conducting channel. Has a central role in coupling the hydrolysis of ATP to the transfer of proteins into and across the cell membrane, serving as an ATP-driven molecular motor driving the stepwise translocation of polypeptide chains across the membrane. The sequence is that of Protein translocase subunit SecA from Staphylococcus carnosus (strain TM300).